A 248-amino-acid polypeptide reads, in one-letter code: 3-deoxy-manno-octulosonate cytidylyltransferase (248 aa).

Belongs to the KdsB family.

It is found in the cytoplasm. The catalysed reaction is 3-deoxy-alpha-D-manno-oct-2-ulosonate + CTP = CMP-3-deoxy-beta-D-manno-octulosonate + diphosphate. It participates in nucleotide-sugar biosynthesis; CMP-3-deoxy-D-manno-octulosonate biosynthesis; CMP-3-deoxy-D-manno-octulosonate from 3-deoxy-D-manno-octulosonate and CTP: step 1/1. The protein operates within bacterial outer membrane biogenesis; lipopolysaccharide biosynthesis. Its function is as follows. Activates KDO (a required 8-carbon sugar) for incorporation into bacterial lipopolysaccharide in Gram-negative bacteria. This is 3-deoxy-manno-octulosonate cytidylyltransferase from Salmonella paratyphi A (strain ATCC 9150 / SARB42).